The following is a 160-amino-acid chain: CST complex subunit STN1 (160 aa).

The OB DNA-binding region spans 41–133 (VEIVGTIVSR…QITANVAVAE (93 aa)).

This sequence belongs to the STN1 family. In terms of assembly, component of the CST complex, composed of CTC1, TEN1 and STN1. Interacts with CTC1. Interacts with TEN1. Interacts with POT1A. In vitro interaction with TEN1 and POT1A is mutually exclusive, indicating that POT1A and TEN1 may compete for the same binding site. As to expression, widely expressed.

It localises to the nucleus. It is found in the chromosome. The protein localises to the telomere. In terms of biological role, component of the CST complex, a complex that binds to single-stranded DNA and is required to protect telomeres from DNA degradation. The CST complex binds single-stranded DNA with high affinity in a sequence-independent manner, while isolated subunits bind DNA with low affinity by themselves. Associates with enzymatically active telomerase. Plays a genomewide role in DNA replication and facilitates re-replication at non-telomeric loci. The polypeptide is CST complex subunit STN1 (Arabidopsis thaliana (Mouse-ear cress)).